The following is a 515-amino-acid chain: uncharacterized protein (515 aa).

The disordered stretch occupies residues 146–171 (SSEVDRNSETEGTREENSNTSDWDEQ). The span at 148–162 (EVDRNSETEGTREEN) shows a compositional bias: basic and acidic residues.

Its subcellular location is the cytoplasm. It is found in the nucleus. This is an uncharacterized protein from Schizosaccharomyces pombe (strain 972 / ATCC 24843) (Fission yeast).